We begin with the raw amino-acid sequence, 318 residues long: NADH-ubiquinone oxidoreductase chain 1 (318 aa).

Transmembrane regions (helical) follow at residues 2 to 22, 76 to 96, 102 to 122, 146 to 166, 171 to 191, 217 to 237, 253 to 273, and 294 to 314; these read FMIN…FLTL, TLAL…YPLI, LLFI…SGWA, LAII…STLI, YLWL…STLA, AGPF…MNAL, ETYT…FLWV, and LPLT…ASCI.

It belongs to the complex I subunit 1 family. In terms of assembly, core subunit of respiratory chain NADH dehydrogenase (Complex I) which is composed of 45 different subunits.

Its subcellular location is the mitochondrion inner membrane. It catalyses the reaction a ubiquinone + NADH + 5 H(+)(in) = a ubiquinol + NAD(+) + 4 H(+)(out). Its function is as follows. Core subunit of the mitochondrial membrane respiratory chain NADH dehydrogenase (Complex I) which catalyzes electron transfer from NADH through the respiratory chain, using ubiquinone as an electron acceptor. Essential for the catalytic activity and assembly of complex I. In Lemur catta (Ring-tailed lemur), this protein is NADH-ubiquinone oxidoreductase chain 1 (MT-ND1).